A 303-amino-acid chain; its full sequence is Probable RuBisCO transcriptional regulator (303 aa).

The HTH lysR-type domain occupies 6-63 (FTLDQLRIFQAIVVEGSFQKAAQSLYISQPAVSLQIQNLEQQLNAPLFDRSHRKAKLT). A DNA-binding region (H-T-H motif) is located at residues 23–42 (FQKAAQSLYISQPAVSLQIQ).

It belongs to the LysR transcriptional regulatory family.

Its subcellular location is the plastid. It is found in the chloroplast. Functionally, trans-acting transcriptional regulator of RuBisCO genes (rbcL and rbcS) expression. This is Probable RuBisCO transcriptional regulator (rbcR) from Cyanidioschyzon merolae (strain NIES-3377 / 10D) (Unicellular red alga).